A 428-amino-acid chain; its full sequence is Dihydroorotase (428 aa).

2 residues coordinate Zn(2+): His-59 and His-61. Substrate contacts are provided by residues 61 to 63 (HFR) and Asn-93. Zn(2+)-binding residues include Asp-151, His-178, and His-231. Residue Asn-277 coordinates substrate. Asp-304 contacts Zn(2+). Residue Asp-304 is part of the active site. Residues His-308 and 322 to 323 (FG) contribute to the substrate site.

It belongs to the metallo-dependent hydrolases superfamily. DHOase family. Class I DHOase subfamily. The cofactor is Zn(2+).

The catalysed reaction is (S)-dihydroorotate + H2O = N-carbamoyl-L-aspartate + H(+). It participates in pyrimidine metabolism; UMP biosynthesis via de novo pathway; (S)-dihydroorotate from bicarbonate: step 3/3. Catalyzes the reversible cyclization of carbamoyl aspartate to dihydroorotate. The chain is Dihydroorotase from Bacillus licheniformis (strain ATCC 14580 / DSM 13 / JCM 2505 / CCUG 7422 / NBRC 12200 / NCIMB 9375 / NCTC 10341 / NRRL NRS-1264 / Gibson 46).